Consider the following 267-residue polypeptide: Indole-3-glycerol phosphate synthase (267 aa).

The protein belongs to the TrpC family.

The enzyme catalyses 1-(2-carboxyphenylamino)-1-deoxy-D-ribulose 5-phosphate + H(+) = (1S,2R)-1-C-(indol-3-yl)glycerol 3-phosphate + CO2 + H2O. Its pathway is amino-acid biosynthesis; L-tryptophan biosynthesis; L-tryptophan from chorismate: step 4/5. The sequence is that of Indole-3-glycerol phosphate synthase from Cupriavidus pinatubonensis (strain JMP 134 / LMG 1197) (Cupriavidus necator (strain JMP 134)).